The chain runs to 348 residues: Protein RecA (348 aa).

Residue 65–72 coordinates ATP; it reads GPESSGKT.

This sequence belongs to the RecA family.

Its subcellular location is the cytoplasm. In terms of biological role, can catalyze the hydrolysis of ATP in the presence of single-stranded DNA, the ATP-dependent uptake of single-stranded DNA by duplex DNA, and the ATP-dependent hybridization of homologous single-stranded DNAs. It interacts with LexA causing its activation and leading to its autocatalytic cleavage. The polypeptide is Protein RecA (Enterococcus gallinarum).